Reading from the N-terminus, the 2386-residue chain is Protein kinase rad3 (2386 aa).

Residues 1386–1943 (TLGIVSLNCG…LWQLMATIKS (558 aa)) enclose the FAT domain. A PI3K/PI4K catalytic domain is found at 2052–2370 (FEDEVDIMNS…QIQELIKSAV (319 aa)). The G-loop stretch occupies residues 2058 to 2064 (IMNSLQK). A catalytic loop region spans residues 2227 to 2235 (GLGDRHGEN). Residues 2247–2271 (HVDFNCLFDKGLTFEKPEKVPFRLT) are activation loop. Positions 2354–2386 (IPLSIEGQIQELIKSAVNPKNLVEMYIGWAAYF) constitute an FATC domain.

The protein belongs to the PI3/PI4-kinase family. ATM subfamily. In terms of assembly, interacts with crb2 (via BRCT domain). Interacts with chk1.

It is found in the nucleus. The enzyme catalyses L-seryl-[protein] + ATP = O-phospho-L-seryl-[protein] + ADP + H(+). It carries out the reaction L-threonyl-[protein] + ATP = O-phospho-L-threonyl-[protein] + ADP + H(+). Functionally, serine/threonine kinase which activates checkpoint signaling upon genotoxic stresses. Involved in G2 arrest following DNA damage where it phosphorylates chk1. Phosphorylation of 'Thr-73' and 'Ser-80' of checkpoint mediator crb2 promotes its interaction with chk1. It is also involved in the dependence of mitosis on the completion of DNA replication. The sequence is that of Protein kinase rad3 (rad3) from Schizosaccharomyces pombe (strain 972 / ATCC 24843) (Fission yeast).